The following is a 268-amino-acid chain: Tropinone reductase homolog At2g29170 (268 aa).

22–46 (LVTGGSKGLGEAVVEELAMLGARVH) is an NADP(+) binding site. Ser-155 is a substrate binding site. The active-site Proton acceptor is the Tyr-168.

Belongs to the short-chain dehydrogenases/reductases (SDR) family. SDR65C subfamily.

This Arabidopsis thaliana (Mouse-ear cress) protein is Tropinone reductase homolog At2g29170.